The following is a 229-amino-acid chain: GTP cyclohydrolase 1 (229 aa).

A disordered region spans residues 1–26 (MDAKIKPIRGTNPAEGRPEFQPAELE). Zn(2+) contacts are provided by Cys-118, His-121, and Cys-189.

This sequence belongs to the GTP cyclohydrolase I family. As to quaternary structure, toroid-shaped homodecamer, composed of two pentamers of five dimers.

It catalyses the reaction GTP + H2O = 7,8-dihydroneopterin 3'-triphosphate + formate + H(+). It participates in cofactor biosynthesis; 7,8-dihydroneopterin triphosphate biosynthesis; 7,8-dihydroneopterin triphosphate from GTP: step 1/1. The chain is GTP cyclohydrolase 1 from Rhodopseudomonas palustris (strain ATCC BAA-98 / CGA009).